A 220-amino-acid chain; its full sequence is Ribose-5-phosphate isomerase A (220 aa).

Substrate contacts are provided by residues 28-31 (TGST), 81-84 (DGAD), and 94-97 (KGGG). Residue E103 is the Proton acceptor of the active site. K121 is a substrate binding site.

This sequence belongs to the ribose 5-phosphate isomerase family. Homodimer.

The catalysed reaction is aldehydo-D-ribose 5-phosphate = D-ribulose 5-phosphate. It participates in carbohydrate degradation; pentose phosphate pathway; D-ribose 5-phosphate from D-ribulose 5-phosphate (non-oxidative stage): step 1/1. Its function is as follows. Catalyzes the reversible conversion of ribose-5-phosphate to ribulose 5-phosphate. This chain is Ribose-5-phosphate isomerase A, found in Aromatoleum aromaticum (strain DSM 19018 / LMG 30748 / EbN1) (Azoarcus sp. (strain EbN1)).